Reading from the N-terminus, the 183-residue chain is MDIDPYKEFGASVEVLSFLPSDFFPSNRDLLDTASALDREALESPEHCSPHHTALRQAILCWGELMNLATWVGSNLEDPASRELVVSYVNVNMGLKIRQLLWFHISCLTFGRETVLEYLVSFGVWIRTPPAYRPPNAPILSTLPETTVVRRRGRSPRRRTPSPRRRRSQSPRRRRSQSRESQC.

Residues 136-183 form a disordered region; that stretch reads NAPILSTLPETTVVRRRGRSPRRRTPSPRRRRSQSPRRRRSQSRESQC. A compositionally biased stretch (basic residues) spans 149 to 176; sequence VRRRGRSPRRRTPSPRRRRSQSPRRRRS. A phosphoserine; by host mark is found at Ser-155, Ser-162, and Ser-170. Residues 155–161 form a 1; half-length repeat; sequence SPRRRTP. The interval 155–177 is 3 X 8 AA repeats of S-P-R-R-R-[PR]-S-Q; that stretch reads SPRRRTPSPRRRRSQSPRRRRSQ. A Bipartite nuclear localization signal motif is present at residues 158-175; the sequence is RRTPSPRRRRSQSPRRRR. 2 repeat units span residues 162–169 and 170–177. The interval 177-183 is RNA binding; the sequence is QSRESQC.

This sequence belongs to the orthohepadnavirus core antigen family. In terms of assembly, homodimerizes, then multimerizes. Interacts with cytosol exposed regions of viral L glycoprotein present in the reticulum-to-Golgi compartment. Interacts with human FLNB. Phosphorylated form interacts with host importin alpha; this interaction depends on the exposure of the NLS, which itself depends upon genome maturation and/or phosphorylation of the capsid protein. Interacts with host NUP153. Phosphorylated by host SRPK1, SRPK2, and maybe protein kinase C or GAPDH. Phosphorylation is critical for pregenomic RNA packaging. Protein kinase C phosphorylation is stimulated by HBx protein and may play a role in transport of the viral genome to the nucleus at the late step during the viral replication cycle.

It is found in the virion. Its subcellular location is the host cytoplasm. In terms of biological role, self assembles to form an icosahedral capsid. Most capsids appear to be large particles with an icosahedral symmetry of T=4 and consist of 240 copies of capsid protein, though a fraction forms smaller T=3 particles consisting of 180 capsid proteins. Entering capsids are transported along microtubules to the nucleus. Phosphorylation of the capsid is thought to induce exposure of nuclear localization signal in the C-terminal portion of the capsid protein that allows binding to the nuclear pore complex via the importin (karyopherin-) alpha and beta. Capsids are imported in intact form through the nuclear pore into the nuclear basket, where it probably binds NUP153. Only capsids that contain the mature viral genome can release the viral DNA and capsid protein into the nucleoplasm. Immature capsids get stuck in the basket. Capsids encapsulate the pre-genomic RNA and the P protein. Pre-genomic RNA is reverse-transcribed into DNA while the capsid is still in the cytoplasm. The capsid can then either be directed to the nucleus, providing more genomes for transcription, or bud through the endoplasmic reticulum to provide new virions. This is Capsid protein from Homo sapiens (Human).